The following is a 273-amino-acid chain: 2,3,4,5-tetrahydropyridine-2,6-dicarboxylate N-succinyltransferase (273 aa).

The substrate site is built by Arg-104 and Asp-141.

The protein belongs to the transferase hexapeptide repeat family. In terms of assembly, homotrimer.

The protein resides in the cytoplasm. It carries out the reaction (S)-2,3,4,5-tetrahydrodipicolinate + succinyl-CoA + H2O = (S)-2-succinylamino-6-oxoheptanedioate + CoA. The protein operates within amino-acid biosynthesis; L-lysine biosynthesis via DAP pathway; LL-2,6-diaminopimelate from (S)-tetrahydrodipicolinate (succinylase route): step 1/3. This chain is 2,3,4,5-tetrahydropyridine-2,6-dicarboxylate N-succinyltransferase, found in Blochmanniella pennsylvanica (strain BPEN).